We begin with the raw amino-acid sequence, 124 residues long: Large ribosomal subunit protein bL20c (124 aa).

This sequence belongs to the bacterial ribosomal protein bL20 family.

The protein resides in the plastid. It localises to the chloroplast. In terms of biological role, binds directly to 23S ribosomal RNA and is necessary for the in vitro assembly process of the 50S ribosomal subunit. It is not involved in the protein synthesizing functions of that subunit. The chain is Large ribosomal subunit protein bL20c from Stigeoclonium helveticum (Green alga).